Reading from the N-terminus, the 139-residue chain is Putative nickel-responsive regulator (139 aa).

Ni(2+) contacts are provided by histidine 77, histidine 88, histidine 90, and cysteine 96.

The protein belongs to the transcriptional regulatory CopG/NikR family. Requires Ni(2+) as cofactor.

Functionally, transcriptional regulator. The chain is Putative nickel-responsive regulator from Haloarcula marismortui (strain ATCC 43049 / DSM 3752 / JCM 8966 / VKM B-1809) (Halobacterium marismortui).